The primary structure comprises 540 residues: 2-isopropylmalate synthase (540 aa).

Residues Val8–Thr273 form the Pyruvate carboxyltransferase domain. Positions 17, 208, 210, and 244 each coordinate Mn(2+). A regulatory domain region spans residues Gln408–His540.

Belongs to the alpha-IPM synthase/homocitrate synthase family. LeuA type 1 subfamily. Homodimer. Requires Mn(2+) as cofactor.

It is found in the cytoplasm. The enzyme catalyses 3-methyl-2-oxobutanoate + acetyl-CoA + H2O = (2S)-2-isopropylmalate + CoA + H(+). Its pathway is amino-acid biosynthesis; L-leucine biosynthesis; L-leucine from 3-methyl-2-oxobutanoate: step 1/4. Functionally, catalyzes the condensation of the acetyl group of acetyl-CoA with 3-methyl-2-oxobutanoate (2-ketoisovalerate) to form 3-carboxy-3-hydroxy-4-methylpentanoate (2-isopropylmalate). This chain is 2-isopropylmalate synthase, found in Synechococcus sp. (strain CC9311).